Here is a 342-residue protein sequence, read N- to C-terminus: N-acetyl-gamma-glutamyl-phosphate reductase (342 aa).

The active site involves Cys147.

Belongs to the NAGSA dehydrogenase family. Type 1 subfamily.

It is found in the cytoplasm. The catalysed reaction is N-acetyl-L-glutamate 5-semialdehyde + phosphate + NADP(+) = N-acetyl-L-glutamyl 5-phosphate + NADPH + H(+). It functions in the pathway amino-acid biosynthesis; L-arginine biosynthesis; N(2)-acetyl-L-ornithine from L-glutamate: step 3/4. Functionally, catalyzes the NADPH-dependent reduction of N-acetyl-5-glutamyl phosphate to yield N-acetyl-L-glutamate 5-semialdehyde. The sequence is that of N-acetyl-gamma-glutamyl-phosphate reductase from Methanosphaera stadtmanae (strain ATCC 43021 / DSM 3091 / JCM 11832 / MCB-3).